The sequence spans 363 residues: S-methylmethionine--homocysteine S-methyltransferase BHMT2 (363 aa).

One can recognise a Hcy-binding domain in the interval 11-305 (KVILERLDSG…YHIRAIAEEL (295 aa)). Zn(2+) contacts are provided by cysteine 208, cysteine 290, and cysteine 291.

In terms of assembly, homotetramer. It depends on Zn(2+) as a cofactor.

The catalysed reaction is S-methyl-L-methionine + L-homocysteine = 2 L-methionine + H(+). The protein operates within amino-acid biosynthesis; L-methionine biosynthesis via de novo pathway; L-methionine from L-homocysteine (BhmT route): step 1/1. In terms of biological role, involved in the regulation of homocysteine metabolism. Converts betaine and homocysteine to dimethylglycine and methionine, respectively. This reaction is also required for the irreversible oxidation of choline. The protein is S-methylmethionine--homocysteine S-methyltransferase BHMT2 (Bhmt2) of Rattus norvegicus (Rat).